Consider the following 1265-residue polypeptide: 1-phosphatidylinositol 4,5-bisphosphate phosphodiesterase gamma-2 (1265 aa).

The 112-residue stretch at Arg-20–Gln-131 folds into the PH domain. A PI-PLC X-box domain is found at Gln-312–Lys-456. Active-site residues include His-327 and His-372. 2 consecutive SH2 domains span residues Trp-532–Val-635 and Trp-646–Val-735. 2 positions are modified to phosphotyrosine; by BTK: Tyr-753 and Tyr-759. The SH3 domain occupies Met-769–Ala-829. Positions Leu-930–Arg-1044 constitute a PI-PLC Y-box domain. The 132-residue stretch at Leu-1038–Asn-1169 folds into the C2 domain. Tyr-1197 carries the phosphotyrosine; by BTK modification. A phosphotyrosine mark is found at Tyr-1217 and Tyr-1245.

As to quaternary structure, part of a complex composed of EEIG1, TNFRSF11A/RANK, PLCG2, GAB2, TEC and BTK; complex formation increases in the presence of TNFSF11/RANKL. Interacts (via SH2 domain) with CSF1R (tyrosine phosphorylated). Interacts constitutively with THEMIS2. Requires Ca(2+) as cofactor. Phosphorylated on tyrosine residues by CSF1R. Phosphorylated on tyrosine residues by BTK and SYK; upon ligand-induced activation of a variety of growth factor receptors and immune system receptors. Phosphorylation leads to increased phospholipase activity.

The protein localises to the membrane raft. The enzyme catalyses a 1,2-diacyl-sn-glycero-3-phospho-(1D-myo-inositol-4,5-bisphosphate) + H2O = 1D-myo-inositol 1,4,5-trisphosphate + a 1,2-diacyl-sn-glycerol + H(+). Functionally, the production of the second messenger molecules diacylglycerol (DAG) and inositol 1,4,5-trisphosphate (IP3) is mediated by activated phosphatidylinositol-specific phospholipase C enzymes. It is a crucial enzyme in transmembrane signaling. The polypeptide is 1-phosphatidylinositol 4,5-bisphosphate phosphodiesterase gamma-2 (Rattus norvegicus (Rat)).